A 556-amino-acid chain; its full sequence is Urocanate hydratase (556 aa).

NAD(+)-binding positions include 53-54 (GG), Gln-131, 177-179 (GMG), Glu-197, 243-244 (NA), 264-268 (QTSAH), 274-275 (YL), and Tyr-323. Residue Cys-411 is part of the active site. Gly-493 contributes to the NAD(+) binding site.

It belongs to the urocanase family. Requires NAD(+) as cofactor.

The protein localises to the cytoplasm. It catalyses the reaction 4-imidazolone-5-propanoate = trans-urocanate + H2O. The protein operates within amino-acid degradation; L-histidine degradation into L-glutamate; N-formimidoyl-L-glutamate from L-histidine: step 2/3. Its function is as follows. Catalyzes the conversion of urocanate to 4-imidazolone-5-propionate. The chain is Urocanate hydratase from Pseudomonas fluorescens (strain SBW25).